Here is a 382-residue protein sequence, read N- to C-terminus: UDP-N-acetylglucosamine--N-acetylmuramyl-(pentapeptide) pyrophosphoryl-undecaprenol N-acetylglucosamine transferase (382 aa).

UDP-N-acetyl-alpha-D-glucosamine contacts are provided by residues 11–13 (TGG), N124, R164, S192, and Q314.

Belongs to the glycosyltransferase 28 family. MurG subfamily.

Its subcellular location is the cell membrane. The enzyme catalyses di-trans,octa-cis-undecaprenyl diphospho-N-acetyl-alpha-D-muramoyl-L-alanyl-D-glutamyl-meso-2,6-diaminopimeloyl-D-alanyl-D-alanine + UDP-N-acetyl-alpha-D-glucosamine = di-trans,octa-cis-undecaprenyl diphospho-[N-acetyl-alpha-D-glucosaminyl-(1-&gt;4)]-N-acetyl-alpha-D-muramoyl-L-alanyl-D-glutamyl-meso-2,6-diaminopimeloyl-D-alanyl-D-alanine + UDP + H(+). It functions in the pathway cell wall biogenesis; peptidoglycan biosynthesis. In terms of biological role, cell wall formation. Catalyzes the transfer of a GlcNAc subunit on undecaprenyl-pyrophosphoryl-MurNAc-pentapeptide (lipid intermediate I) to form undecaprenyl-pyrophosphoryl-MurNAc-(pentapeptide)GlcNAc (lipid intermediate II). The protein is UDP-N-acetylglucosamine--N-acetylmuramyl-(pentapeptide) pyrophosphoryl-undecaprenol N-acetylglucosamine transferase of Deinococcus deserti (strain DSM 17065 / CIP 109153 / LMG 22923 / VCD115).